Reading from the N-terminus, the 277-residue chain is Alpha carbonic anhydrase 3 (277 aa).

The signal sequence occupies residues 1-19 (MKTIILFVTFLALSSSSLA). The Alpha-carbonic anhydrase domain maps to 24 to 259 (TEFHYKPGEI…LNGRLVYLNE (236 aa)). Cys-49 and Cys-209 are oxidised to a cystine. 2 N-linked (GlcNAc...) asparagine glycosylation sites follow: Asn-70 and Asn-107. His-117, His-119, and His-136 together coordinate Zn(2+). 205 to 206 (TT) contacts substrate. The interval 257-277 (LNEQSSPSPTPRLRIPRVGPV) is disordered.

It belongs to the alpha-class carbonic anhydrase family. Requires Zn(2+) as cofactor. In terms of processing, N-glycosylated. Expressed in flowers and siliques.

The protein resides in the plastid. It localises to the chloroplast stroma. The catalysed reaction is hydrogencarbonate + H(+) = CO2 + H2O. In terms of biological role, reversible hydration of carbon dioxide. The polypeptide is Alpha carbonic anhydrase 3 (ACA3) (Arabidopsis thaliana (Mouse-ear cress)).